The following is a 409-amino-acid chain: Dual-specificity RNA methyltransferase RlmN (409 aa).

Glu117 functions as the Proton acceptor in the catalytic mechanism. Residues 128-377 enclose the Radical SAM core domain; the sequence is LNGRKTLCIS…CTIRQTRGDD (250 aa). Cys135 and Cys382 are oxidised to a cystine. 3 residues coordinate [4Fe-4S] cluster: Cys142, Cys146, and Cys149. S-adenosyl-L-methionine-binding positions include 205-206, Ser237, 259-261, and Asn339; these read GE and SLH. The active-site S-methylcysteine intermediate is Cys382.

This sequence belongs to the radical SAM superfamily. RlmN family. [4Fe-4S] cluster serves as cofactor.

The protein localises to the cytoplasm. It carries out the reaction adenosine(2503) in 23S rRNA + 2 reduced [2Fe-2S]-[ferredoxin] + 2 S-adenosyl-L-methionine = 2-methyladenosine(2503) in 23S rRNA + 5'-deoxyadenosine + L-methionine + 2 oxidized [2Fe-2S]-[ferredoxin] + S-adenosyl-L-homocysteine. The catalysed reaction is adenosine(37) in tRNA + 2 reduced [2Fe-2S]-[ferredoxin] + 2 S-adenosyl-L-methionine = 2-methyladenosine(37) in tRNA + 5'-deoxyadenosine + L-methionine + 2 oxidized [2Fe-2S]-[ferredoxin] + S-adenosyl-L-homocysteine. Functionally, specifically methylates position 2 of adenine 2503 in 23S rRNA and position 2 of adenine 37 in tRNAs. m2A2503 modification seems to play a crucial role in the proofreading step occurring at the peptidyl transferase center and thus would serve to optimize ribosomal fidelity. This chain is Dual-specificity RNA methyltransferase RlmN, found in Psychrobacter arcticus (strain DSM 17307 / VKM B-2377 / 273-4).